Consider the following 131-residue polypeptide: Proline-rich protein 3 (131 aa).

Residues 1-77 form a disordered region; the sequence is LHRGPPGSRG…KEQRNPRRLK (77 aa). The span at 12-25 shows a compositional bias: pro residues; it reads MIPPLLSLPPPPRG. Residues 28–44 show a composition bias toward gly residues; it reads PLRGGLGPRSGPYGRGW. The segment at 98–126 adopts a C3H1-type zinc-finger fold; sequence KSDRPVCRHFAKKGHCRYEDLCAFYHPGA.

In Sus scrofa (Pig), this protein is Proline-rich protein 3 (PRR3).